Here is a 384-residue protein sequence, read N- to C-terminus: Substance-K receptor (384 aa).

At 1–32 (MGGRAIVTDTNIFSGLESNTTGVTAFSMPAWQ) the chain is on the extracellular side. An N-linked (GlcNAc...) asparagine glycan is attached at Asn19. A helical membrane pass occupies residues 33–56 (LALWATAYLGLVLVAVTGNATVIW). At 57 to 69 (IILAHERMRTVTN) the chain is on the cytoplasmic side. Residues 70–90 (YFIINLALADLCMAAFNATFN) traverse the membrane as a helical segment. Topologically, residues 91 to 107 (FVYASHNIWYFGRAFCY) are extracellular. Residues Cys106 and Cys181 are joined by a disulfide bond. A helical transmembrane segment spans residues 108–129 (FQNLFPITAMFVSIYSMTAIAA). The Cytoplasmic portion of the chain corresponds to 130–149 (DRYMAIVHPFQPRLSAPITK). Residues 150–170 (ATIAGIWLVALALASPQCFYS) form a helical membrane-spanning segment. The Extracellular portion of the chain corresponds to 171 to 196 (TITVDQGATKCVVAWPNDNGGKMLLL). A helical transmembrane segment spans residues 197–218 (YHLVVFVLVYFLPLVVMFVAYS). The Cytoplasmic portion of the chain corresponds to 219-251 (VIGLTLWKRAVPRHQAHGANLRHLHAKKKFVKA). The chain crosses the membrane as a helical span at residues 252–272 (MVLVVLTFAICWLPYHLYFIL). At 273-290 (GSFQKDIYYRKFIQQVYL) the chain is on the extracellular side. A helical membrane pass occupies residues 291–310 (ALFWLAMSSTMYNPIIYCCL). At 311 to 384 (NHRFRSGFRL…SPQDVEPAAP (74 aa)) the chain is on the cytoplasmic side. A lipid anchor (S-palmitoyl cysteine) is attached at Cys324.

This sequence belongs to the G-protein coupled receptor 1 family.

Its subcellular location is the cell membrane. Its function is as follows. This is a receptor for the tachykinin neuropeptide substance K (neurokinin A). It is associated with G proteins that activate a phosphatidylinositol-calcium second messenger system. The rank order of affinity of this receptor to tachykinins is: substance K &gt; neuromedin-K &gt; substance P. In Mesocricetus auratus (Golden hamster), this protein is Substance-K receptor (TACR2).